We begin with the raw amino-acid sequence, 318 residues long: Pyrimidine-specific ribonucleoside hydrolase RihA (318 aa).

His-240 is a catalytic residue.

The protein belongs to the IUNH family. RihA subfamily.

Its function is as follows. Hydrolyzes cytidine or uridine to ribose and cytosine or uracil, respectively. The chain is Pyrimidine-specific ribonucleoside hydrolase RihA from Shewanella sp. (strain MR-4).